The chain runs to 193 residues: Peptide deformylase (193 aa).

Residues cysteine 111 and histidine 155 each coordinate Fe cation. Glutamate 156 is an active-site residue. Residue histidine 159 coordinates Fe cation.

This sequence belongs to the polypeptide deformylase family. Requires Fe(2+) as cofactor.

The catalysed reaction is N-terminal N-formyl-L-methionyl-[peptide] + H2O = N-terminal L-methionyl-[peptide] + formate. Its function is as follows. Removes the formyl group from the N-terminal Met of newly synthesized proteins. Requires at least a dipeptide for an efficient rate of reaction. N-terminal L-methionine is a prerequisite for activity but the enzyme has broad specificity at other positions. This is Peptide deformylase from Mycoplasma genitalium (strain ATCC 33530 / DSM 19775 / NCTC 10195 / G37) (Mycoplasmoides genitalium).